A 438-amino-acid chain; its full sequence is Gamma-glutamyl phosphate reductase (438 aa).

Belongs to the gamma-glutamyl phosphate reductase family.

The protein resides in the cytoplasm. The enzyme catalyses L-glutamate 5-semialdehyde + phosphate + NADP(+) = L-glutamyl 5-phosphate + NADPH + H(+). It participates in amino-acid biosynthesis; L-proline biosynthesis; L-glutamate 5-semialdehyde from L-glutamate: step 2/2. Its function is as follows. Catalyzes the NADPH-dependent reduction of L-glutamate 5-phosphate into L-glutamate 5-semialdehyde and phosphate. The product spontaneously undergoes cyclization to form 1-pyrroline-5-carboxylate. The polypeptide is Gamma-glutamyl phosphate reductase (Natronomonas pharaonis (strain ATCC 35678 / DSM 2160 / CIP 103997 / JCM 8858 / NBRC 14720 / NCIMB 2260 / Gabara) (Halobacterium pharaonis)).